The following is a 451-amino-acid chain: Trigger factor (451 aa).

Residues 173–258 (GDRVTVDFVG…LKKVEWAHLP (86 aa)) enclose the PPIase FKBP-type domain.

This sequence belongs to the FKBP-type PPIase family. Tig subfamily.

The protein localises to the cytoplasm. It carries out the reaction [protein]-peptidylproline (omega=180) = [protein]-peptidylproline (omega=0). Functionally, involved in protein export. Acts as a chaperone by maintaining the newly synthesized protein in an open conformation. Functions as a peptidyl-prolyl cis-trans isomerase. The chain is Trigger factor from Cupriavidus taiwanensis (strain DSM 17343 / BCRC 17206 / CCUG 44338 / CIP 107171 / LMG 19424 / R1) (Ralstonia taiwanensis (strain LMG 19424)).